A 287-amino-acid chain; its full sequence is ATP synthase gamma chain (287 aa).

The protein belongs to the ATPase gamma chain family. In terms of assembly, F-type ATPases have 2 components, CF(1) - the catalytic core - and CF(0) - the membrane proton channel. CF(1) has five subunits: alpha(3), beta(3), gamma(1), delta(1), epsilon(1). CF(0) has three main subunits: a, b and c.

It is found in the cell inner membrane. In terms of biological role, produces ATP from ADP in the presence of a proton gradient across the membrane. The gamma chain is believed to be important in regulating ATPase activity and the flow of protons through the CF(0) complex. This is ATP synthase gamma chain from Methylococcus capsulatus (strain ATCC 33009 / NCIMB 11132 / Bath).